The sequence spans 606 residues: MSADSRIAAITARIVERSKPYREPYLDRVRSAATNGPHRTVLGCGNLAHGFAVCSPAEKVALAGDRVPNLGIITSYNDMLSAHQPFETYPALIREAAHEAGGVAQVAGGVPAMCDGVTQGQPGMELSLFSRDVIAMAAGIGLSHNMFDAAVYLGVCDKIVPGLAIAALTFGHLPAVFIPAGPMTTGLPNDEKAKVRQLFAEGKVGRDELLEAESKSYHGPGTCTFYGTANSNQMLMEIMGFHLPGASFINPGTPLRDALTREATKRALAITALGNEFTPAGEMIDERSIVNGVVGLHATGGSTNHTMHLVAMARAAGIVLTWQDISELSDLVPLLARVYPNGLADVNHFHAAGGMGFLIAQLLRKGLLHDDVRTVYGQGLSAYAIDVKLGENGSVKREPAPEASADPKVLATVDRPFQHTGGLKMLSGNIGKAVIKISAVKPESHVIEAPAKIFNDQAELNAAFKAGKLEGDFVAVVRFQGPKANGMPELHKLTTVLGILQDRGQKVAILTDGRMSGASGKVPAAIHVTPEAKEGGPIARIQEGDIVRIDAINGKVEVLVEDIALKTRVPAHIDLSDNEFGMGRELFAPFRQIAGAADRGGSVLFH.

The [4Fe-4S] cluster site is built by Cys156 and Cys223.

Belongs to the IlvD/Edd family. It depends on [4Fe-4S] cluster as a cofactor.

It catalyses the reaction 6-phospho-D-gluconate = 2-dehydro-3-deoxy-6-phospho-D-gluconate + H2O. It functions in the pathway carbohydrate metabolism; Entner-Doudoroff pathway. Its function is as follows. Catalyzes the dehydration of 6-phospho-D-gluconate to 2-dehydro-3-deoxy-6-phospho-D-gluconate. The protein is Phosphogluconate dehydratase of Rhizobium meliloti (strain 1021) (Ensifer meliloti).